The primary structure comprises 215 residues: Redox-sensing transcriptional repressor Rex (215 aa).

Positions 18–57 (LYYRFLKNLHASGKQRVSSAELSEAVKVDPATIRRDFSYF) form a DNA-binding region, H-T-H motif. 92-97 (GVGNLG) contacts NAD(+).

The protein belongs to the transcriptional regulatory Rex family. In terms of assembly, homodimer.

It is found in the cytoplasm. Its function is as follows. Modulates transcription in response to changes in cellular NADH/NAD(+) redox state. In Geobacillus sp. (strain WCH70), this protein is Redox-sensing transcriptional repressor Rex.